The following is a 916-amino-acid chain: Cadherin-4 (916 aa).

The first 20 residues, 1 to 20 (MTAGAGVLLLLLSLSGALRA), serve as a signal peptide directing secretion. Residues 21–169 (HNEDLTTRET…NANGLRRRKR (149 aa)) constitute a propeptide that is removed on maturation. The segment at 124 to 168 (TSSPHSGHKPQKGKKVVALDPSPPPKDTLLPWPQHQNANGLRRRK) is disordered. Residues 129–138 (SGHKPQKGKK) are compositionally biased toward basic residues. 5 consecutive Cadherin domains span residues 170–277 (DWVI…RPEF), 278–392 (INQV…PPEF), 393–507 (TAST…APYF), 508–613 (PSNH…DNAP), and 614–724 (ELLP…TIGA). Residues 170–734 (DWVIPPINVP…VAAAGLGTGA (565 aa)) are Extracellular-facing. Residues Asn283, Asn412, Asn557, Asn632, Asn661, and Asn702 are each glycosylated (N-linked (GlcNAc...) asparagine). Residues 735 to 756 (IVAILICILILLTMVLLFVMWM) form a helical membrane-spanning segment. Topologically, residues 757–916 (KRREKERHTK…ADMYGGGEED (160 aa)) are cytoplasmic. A disordered region spans residues 806 to 838 (MGHVPSKAPGVRRVDERPVGAEPQYPIRPMVPH).

As to expression, expressed mainly in brain but also found in other tissues.

The protein resides in the cell membrane. Its function is as follows. Cadherins are calcium-dependent cell adhesion proteins. They preferentially interact with themselves in a homophilic manner in connecting cells; cadherins may thus contribute to the sorting of heterogeneous cell types. May play an important role in retinal development. In Homo sapiens (Human), this protein is Cadherin-4 (CDH4).